A 1193-amino-acid chain; its full sequence is Magnesium-chelatase subunit H (1193 aa).

The protein belongs to the Mg-chelatase subunit H family.

It carries out the reaction protoporphyrin IX + Mg(2+) + ATP + H2O = Mg-protoporphyrin IX + ADP + phosphate + 3 H(+). Its pathway is porphyrin-containing compound metabolism; bacteriochlorophyll biosynthesis (light-independent). In terms of biological role, involved in bacteriochlorophyll pigment biosynthesis; introduces a magnesium ion into protoporphyrin IX to yield Mg-protoroporphyrin IX. The sequence is that of Magnesium-chelatase subunit H (bchH) from Cereibacter sphaeroides (strain ATCC 17023 / DSM 158 / JCM 6121 / CCUG 31486 / LMG 2827 / NBRC 12203 / NCIMB 8253 / ATH 2.4.1.) (Rhodobacter sphaeroides).